The primary structure comprises 555 residues: MEPVTKWSPKQVVDWTRGLDDCLQPYVHKFEREKIDGEQLLKISHQDLEELGVTRIGHQELVLEAVDLLCALNYGLETDNMKNLVLKLRASSHNLQNYISSRRKSPAYDGNTSRKPPNEFLTSVVELIGAAKALLAWLDRAPFTGITDLSVTKNKIIQLCLDLTTAVQKDCLVAEMEDKVLNVVKVLNGICDKMMHSTTDPVMSQCACLEEVHLPNVRPGEGLGMYIKSTYDGLHVITGTTENSPADRSQKIHAGDEVIQVNRQTVVGWQLKNLVKKLRENPTGVVLLLKKRPTGSFSFTPAPLKNLRWKPPLVQTSPPPTTTQSPESTMDASLKKEKPAILDLYIPPPPAVPYSPRDENVSFSYRGHTKSKQPLPGRKGSESPNSFLDQESQRRRFTITDSDQLPGYSVGTNILPIKMRGKTPSYGKPRPLSMPADGNWMGIVDPFAKPRGHGRKGEDALCRYFSNERITPIIEESASPVYRFSRPLTERHLVRGADYIRGSRCYINSDLHSSATIPFQEEGPKKKSASSSAKASSGEPSLLVSWLTRLKLLTH.

In terms of domain architecture, SAM spans 7-72 (WSPKQVVDWT…LEAVDLLCAL (66 aa)). A CRIC domain is found at 80–174 (NMKNLVLKLR…TAVQKDCLVA (95 aa)). One can recognise a PDZ domain in the interval 211–293 (EVHLPNVRPG…GVVLLLKKRP (83 aa)). Disordered regions lie at residues 308-333 (RWKPPLVQTSPPPTTTQSPESTMDAS), 348-391 (PPPA…LDQE), and 518-538 (PFQEEGPKKKSASSSAKASSG). Low complexity predominate over residues 311–329 (PPLVQTSPPPTTTQSPEST). Residues 325-546 (SPESTMDASL…SGEPSLLVSW (222 aa)) form the DUF1170 domain. Phosphoserine is present on residues serine 381 and serine 383.

The protein belongs to the CNKSR family. Interacts with epithelial sodium channel ENaC. Interacts directly with SCNN1A (ENaC subunit alpha) and SCNN1B (ENaC subunit beta) C-terminal tails. Interacts with ENaC regulatory proteins NEDD4L, RAF1 and SGK1.

Its subcellular location is the cytoplasm. It is found in the apical cell membrane. Its function is as follows. Involved in transepithelial sodium transport. Regulates aldosterone-induced and epithelial sodium channel (ENaC)-mediated sodium transport through regulation of ENaC cell surface expression. Acts as a scaffold protein coordinating the assembly of an ENaC-regulatory complex (ERC). The polypeptide is Connector enhancer of kinase suppressor of ras 3 (Cnksr3) (Rattus norvegicus (Rat)).